A 477-amino-acid polypeptide reads, in one-letter code: Cytochrome c-552 (477 aa).

The signal sequence occupies residues 1–26 (MVRISTSISYLWGMVASLFLMMPAYS). Residue His-94 coordinates heme c. Positions 122, 125, and 126 each coordinate heme. Heme c-binding residues include Cys-160, Cys-163, His-164, Cys-209, Cys-212, and His-213. 4 residues coordinate Ca(2+): Glu-215, Tyr-216, Lys-261, and Gln-263. Tyr-216 contacts substrate. Position 264 (His-264) interacts with substrate. Heme c-binding residues include His-275, Cys-282, Cys-285, His-286, His-301, Cys-314, Cys-317, His-318, and His-393.

Belongs to the cytochrome c-552 family. Ca(2+) is required as a cofactor. It depends on heme c as a cofactor.

Its subcellular location is the periplasm. It catalyses the reaction 6 Fe(III)-[cytochrome c] + NH4(+) + 2 H2O = 6 Fe(II)-[cytochrome c] + nitrite + 8 H(+). Its pathway is nitrogen metabolism; nitrate reduction (assimilation). In terms of biological role, catalyzes the reduction of nitrite to ammonia, consuming six electrons in the process. The chain is Cytochrome c-552 from Pectobacterium carotovorum subsp. carotovorum (strain PC1).